Reading from the N-terminus, the 156-residue chain is Ecotin (156 aa).

The signal sequence occupies residues 1–19 (MKALLIAAGVAALSSTAMA). C65 and C102 are disulfide-bonded.

Belongs to the protease inhibitor I11 (ecotin) family. Homodimer.

Its subcellular location is the periplasm. General inhibitor of family S1 serine proteases. The sequence is that of Ecotin from Pseudomonas aeruginosa (strain ATCC 15692 / DSM 22644 / CIP 104116 / JCM 14847 / LMG 12228 / 1C / PRS 101 / PAO1).